The sequence spans 405 residues: DNA polymerase IV 1 (405 aa).

Residues 23-203 (IAHIDCDAFY…RPVTTIWGVG (181 aa)) form the UmuC domain. Aspartate 27 and aspartate 120 together coordinate Mg(2+). The active site involves glutamate 121.

Belongs to the DNA polymerase type-Y family. In terms of assembly, monomer. Mg(2+) is required as a cofactor.

The protein resides in the cytoplasm. It carries out the reaction DNA(n) + a 2'-deoxyribonucleoside 5'-triphosphate = DNA(n+1) + diphosphate. Its function is as follows. Poorly processive, error-prone DNA polymerase involved in untargeted mutagenesis. Copies undamaged DNA at stalled replication forks, which arise in vivo from mismatched or misaligned primer ends. These misaligned primers can be extended by PolIV. Exhibits no 3'-5' exonuclease (proofreading) activity. May be involved in translesional synthesis, in conjunction with the beta clamp from PolIII. The protein is DNA polymerase IV 1 (dinB1) of Agrobacterium fabrum (strain C58 / ATCC 33970) (Agrobacterium tumefaciens (strain C58)).